The following is a 178-amino-acid chain: Adenine phosphoribosyltransferase (178 aa).

This sequence belongs to the purine/pyrimidine phosphoribosyltransferase family. As to quaternary structure, homodimer.

It is found in the cytoplasm. It carries out the reaction AMP + diphosphate = 5-phospho-alpha-D-ribose 1-diphosphate + adenine. The protein operates within purine metabolism; AMP biosynthesis via salvage pathway; AMP from adenine: step 1/1. Functionally, catalyzes a salvage reaction resulting in the formation of AMP, that is energically less costly than de novo synthesis. The polypeptide is Adenine phosphoribosyltransferase (Streptomyces clavuligerus).